A 387-amino-acid chain; its full sequence is Hydroxycarboxylic acid receptor 3 (387 aa).

The Extracellular segment spans residues 1 to 28; sequence MNRHHLQDHFLEIDKKNCCVFRDDFIAK. The chain crosses the membrane as a helical span at residues 29-50; the sequence is VLPPVLGLEFIFGLLGNGLALW. Topologically, residues 51–63 are cytoplasmic; the sequence is IFCFHLKSWKSSR. Residues 64-85 form a helical membrane-spanning segment; it reads IFLFNLAVADFLLIICLPFVMD. At 86-102 the chain is on the extracellular side; sequence YYVRRSDWKFGDIPCRL. C100 and C177 are oxidised to a cystine. A helical membrane pass occupies residues 103 to 123; sequence VLFMFAMNRQGSIIFLTVVAV. At 124–142 the chain is on the cytoplasmic side; sequence DRYFRVVHPHHALNKISNW. The helical transmembrane segment at 143-163 threads the bilayer; it reads TAAIISCLLWGITVGLTVHLL. Topologically, residues 164–194 are extracellular; it reads KKKLLIQNGTANVCISFSICHTFRWHEAMFL. The helical transmembrane segment at 195-209 threads the bilayer; it reads LEFFLPLGIILFCSA. The Cytoplasmic segment spans residues 210–236; sequence RIIWSLRQRQMDRHAKIKRAITFIMVV. Residues 237-256 traverse the membrane as a helical segment; it reads AIVFVICFLPSVVVRIHIFW. Residues 257-273 lie on the Extracellular side of the membrane; that stretch reads LLHTSGTQNCEVYRSVD. The helical transmembrane segment at 274-298 threads the bilayer; sequence LAFFITLSFTYMNSMLDPVVYYFSS. Residues 299 to 387 are Cytoplasmic-facing; the sequence is PSFPNFFSTL…LEKQLGCCIE (89 aa). The disordered stretch occupies residues 319 to 343; sequence GEPDNNRSTSVELTGDPNKTRGAPE.

Belongs to the G-protein coupled receptor 1 family. As to expression, expression largely restricted to adipose tissue and spleen.

Its subcellular location is the cell membrane. Its function is as follows. Receptor for 3-OH-octanoid acid mediates a negative feedback regulation of adipocyte lipolysis to counteract prolipolytic influences under conditions of physiological or pathological increases in beta-oxidation rates. Acts as a low affinity receptor for nicotinic acid. This pharmacological effect requires nicotinic acid doses that are much higher than those provided by a normal diet. In Homo sapiens (Human), this protein is Hydroxycarboxylic acid receptor 3 (HCAR3).